Here is a 177-residue protein sequence, read N- to C-terminus: Secretion monitor (177 aa).

The first 30 residues, 1-30 (MIGILNRWRQFGRRYFWPHLLLGMVAASLG), serve as a signal peptide directing secretion.

It belongs to the SecM family.

Its subcellular location is the cytoplasm. The protein resides in the cytosol. The protein localises to the periplasm. Regulates secA expression by translational coupling of the secM secA operon. Translational pausing at a specific Pro residue 5 residues before the end of the protein may allow disruption of a mRNA repressor helix that normally suppresses secA translation initiation. The sequence is that of Secretion monitor from Yersinia enterocolitica serotype O:8 / biotype 1B (strain NCTC 13174 / 8081).